The chain runs to 477 residues: Bifunctional protein HldE (477 aa).

A ribokinase region spans residues 1-318 (MQIQLPMFQN…RRAVQQEQGA (318 aa)). 195-198 (NLSE) contacts ATP. The active site involves Asp264. Residues 344 to 477 (FTNGCFDIIH…VEKIRKDQVK (134 aa)) form a cytidylyltransferase region.

It in the N-terminal section; belongs to the carbohydrate kinase PfkB family. The protein in the C-terminal section; belongs to the cytidylyltransferase family. In terms of assembly, homodimer.

The enzyme catalyses D-glycero-beta-D-manno-heptose 7-phosphate + ATP = D-glycero-beta-D-manno-heptose 1,7-bisphosphate + ADP + H(+). The catalysed reaction is D-glycero-beta-D-manno-heptose 1-phosphate + ATP + H(+) = ADP-D-glycero-beta-D-manno-heptose + diphosphate. It functions in the pathway nucleotide-sugar biosynthesis; ADP-L-glycero-beta-D-manno-heptose biosynthesis; ADP-L-glycero-beta-D-manno-heptose from D-glycero-beta-D-manno-heptose 7-phosphate: step 1/4. The protein operates within nucleotide-sugar biosynthesis; ADP-L-glycero-beta-D-manno-heptose biosynthesis; ADP-L-glycero-beta-D-manno-heptose from D-glycero-beta-D-manno-heptose 7-phosphate: step 3/4. Functionally, catalyzes the phosphorylation of D-glycero-D-manno-heptose 7-phosphate at the C-1 position to selectively form D-glycero-beta-D-manno-heptose-1,7-bisphosphate. In terms of biological role, catalyzes the ADP transfer from ATP to D-glycero-beta-D-manno-heptose 1-phosphate, yielding ADP-D-glycero-beta-D-manno-heptose. This Hahella chejuensis (strain KCTC 2396) protein is Bifunctional protein HldE.